The primary structure comprises 534 residues: MGLCFSSPKATRRGTGSRNPNPDSPTQGKASEKVSNKNKKNTKKIQLRHQGGIPYGKRIDFGYAKDFDNRYTIGKLLGHGQFGFTYVATDNNNGNRVAVKRIDKAKMTQPIEVEDVKREVKILQALGGHENVVGFHNAFEDKTYIYIVMELCDGGELLDRILAKKDSRYTEKDAAVVVRQMLKVAAECHLRGLVHRDMKPENFLFKSTEEGSSLKATDFGLSDFIKPGVKFQDIVGSAYYVAPEVLKRRSGPESDVWSIGVITYILLCGRRPFWDKTQDGIFNEVMRKKPDFREVPWPTISNGAKDFVKKLLVKEPRARLTAAQALSHSWVKEGGEASEVPIDISVLNNMRQFVKFSRLKQIALRALAKTINEDELDDLRDQFDAIDIDKNGSISLEEMRQALAKDVPWKLKDARVAEILQANDSNTDGLVDFTEFVVAALHVNQLEEHDSEKWQQRSRAAFDKFDIDGDGFITPEELRLQTGLKGSIEPLLEEADVDEDGRISINEFRRLLRSASLKSKNVKSPPGYQLSQKM.

Residues 1–49 (MGLCFSSPKATRRGTGSRNPNPDSPTQGKASEKVSNKNKKNTKKIQLRH) form a disordered region. A lipid anchor (N-myristoyl glycine) is attached at glycine 2. A compositionally biased stretch (polar residues) spans 14–29 (GTGSRNPNPDSPTQGK). Positions 36–47 (NKNKKNTKKIQL) are enriched in basic residues. The 261-residue stretch at 71 to 331 (YTIGKLLGHG…AAQALSHSWV (261 aa)) folds into the Protein kinase domain. ATP contacts are provided by residues 77–85 (LGHGQFGFT) and lysine 100. The active-site Proton acceptor is aspartate 197. The residue at position 237 (serine 237) is a Phosphoserine. An autoinhibitory domain region spans residues 337–367 (ASEVPIDISVLNNMRQFVKFSRLKQIALRAL). EF-hand domains are found at residues 374–409 (DELD…DVPW), 411–446 (LKDA…VNQL), 453–488 (KWQQ…KGSI), and 491–518 (LLEE…ASLK). Ca(2+) contacts are provided by aspartate 387, aspartate 389, asparagine 391, serine 393, glutamate 398, aspartate 424, asparagine 426, aspartate 428, glutamate 435, aspartate 466, aspartate 468, aspartate 470, glutamate 477, aspartate 496, aspartate 498, aspartate 500, and arginine 502. A Phosphoserine modification is found at serine 504. Ca(2+) is bound at residue glutamate 507.

This sequence belongs to the protein kinase superfamily. Ser/Thr protein kinase family. CDPK subfamily.

It is found in the membrane. The enzyme catalyses L-seryl-[protein] + ATP = O-phospho-L-seryl-[protein] + ADP + H(+). It catalyses the reaction L-threonyl-[protein] + ATP = O-phospho-L-threonyl-[protein] + ADP + H(+). With respect to regulation, activated by calcium. Autophosphorylation may play an important role in the regulation of the kinase activity. In terms of biological role, may play a role in signal transduction pathways that involve calcium as a second messenger. The chain is Calcium-dependent protein kinase 18 (CPK18) from Arabidopsis thaliana (Mouse-ear cress).